The chain runs to 261 residues: Calbindin (261 aa).

Ala-2 carries the post-translational modification N-acetylalanine. Residues 2–7 (AESHLQ) form an interaction with RANBP9 region. EF-hand domains lie at 11 to 46 (ITAS…LQQA), 53 to 88 (ELSP…EENF), 98 to 133 (KSCE…LLEK), 142 to 177 (KLAE…QENF), and 186 to 221 (MCGK…LCEK). Positions 24, 26, 28, 30, and 35 each coordinate Ca(2+). Ca(2+) contacts are provided by Asp-111, Asp-113, Glu-122, Asp-155, Asn-157, Asp-159, Lys-161, Glu-166, Asp-199, Asp-201, Asn-203, Tyr-205, and Glu-210.

Belongs to the calbindin family. In terms of assembly, interacts with RANBP9.

Functionally, buffers cytosolic calcium. May stimulate a membrane Ca(2+)-ATPase and a 3',5'-cyclic nucleotide phosphodiesterase. The protein is Calbindin (CALB1) of Pongo abelii (Sumatran orangutan).